Here is an 89-residue protein sequence, read N- to C-terminus: Porphobilinogen deaminase (89 aa).

It belongs to the HMBS family. In terms of assembly, monomer. Dipyrromethane is required as a cofactor.

It catalyses the reaction 4 porphobilinogen + H2O = hydroxymethylbilane + 4 NH4(+). The protein operates within porphyrin-containing compound metabolism; protoporphyrin-IX biosynthesis; coproporphyrinogen-III from 5-aminolevulinate: step 2/4. Functionally, tetrapolymerization of the monopyrrole PBG into the hydroxymethylbilane pre-uroporphyrinogen in several discrete steps. This Dickeya chrysanthemi (Pectobacterium chrysanthemi) protein is Porphobilinogen deaminase (hemC).